The sequence spans 607 residues: Probable Ufm1-specific protease 2 (607 aa).

Residues C440, D564, and H566 contribute to the active site.

Belongs to the peptidase C78 family.

In terms of biological role, thiol protease which recognizes and hydrolyzes the peptide bond at the C-terminal Gly of UFM1, a ubiquitin-like modifier protein bound to a number of target proteins. Does not hydrolyze SUMO1 or ISG15 ubiquitin-like proteins. The sequence is that of Probable Ufm1-specific protease 2 from Drosophila melanogaster (Fruit fly).